The sequence spans 414 residues: Multifunctional CCA protein (414 aa).

Positions 8 and 11 each coordinate ATP. Positions 8 and 11 each coordinate CTP. Residues Glu21 and Asp23 each contribute to the Mg(2+) site. Arg91, Arg137, and Arg140 together coordinate ATP. CTP-binding residues include Arg91, Arg137, and Arg140. One can recognise an HD domain in the interval 228 to 329; that stretch reads TGIHTLMTLA…LKLFDAIDVW (102 aa).

Belongs to the tRNA nucleotidyltransferase/poly(A) polymerase family. Bacterial CCA-adding enzyme type 1 subfamily. Monomer. Can also form homodimers and oligomers. Requires Mg(2+) as cofactor. The cofactor is Ni(2+).

It catalyses the reaction a tRNA precursor + 2 CTP + ATP = a tRNA with a 3' CCA end + 3 diphosphate. The enzyme catalyses a tRNA with a 3' CCA end + 2 CTP + ATP = a tRNA with a 3' CCACCA end + 3 diphosphate. Its function is as follows. Catalyzes the addition and repair of the essential 3'-terminal CCA sequence in tRNAs without using a nucleic acid template. Adds these three nucleotides in the order of C, C, and A to the tRNA nucleotide-73, using CTP and ATP as substrates and producing inorganic pyrophosphate. tRNA 3'-terminal CCA addition is required both for tRNA processing and repair. Also involved in tRNA surveillance by mediating tandem CCA addition to generate a CCACCA at the 3' terminus of unstable tRNAs. While stable tRNAs receive only 3'-terminal CCA, unstable tRNAs are marked with CCACCA and rapidly degraded. The sequence is that of Multifunctional CCA protein from Yersinia enterocolitica serotype O:8 / biotype 1B (strain NCTC 13174 / 8081).